The chain runs to 281 residues: MALYCIGDIQGCHDAFERLLHRVDFSASRDTLYILGDLVNRGPESDKVLRTCMAAGDSMRALLGNHDLHLLAAAQGVRRSSRRDTLARVLDAPDRDQLLDWLRHQPLARSHRMAHGEELLMVHAGVLPQWSSQEVMALAGEVHSVLRSKQLPDFLQAMYGNQPDRWSPDLQGWERLRVIVNALTRLRFCTAQGVMDFDSTESAEQAAPGLMPWFDVPGRATASATIAFGHWSTLGHISRPDLVALDTGCVWGGCLSMMRFGDHLADRELIQVDCPQAQAPG.

This sequence belongs to the Ap4A hydrolase family.

The enzyme catalyses P(1),P(4)-bis(5'-adenosyl) tetraphosphate + H2O = 2 ADP + 2 H(+). In terms of biological role, hydrolyzes diadenosine 5',5'''-P1,P4-tetraphosphate to yield ADP. The protein is Bis(5'-nucleosyl)-tetraphosphatase, symmetrical of Delftia acidovorans (strain DSM 14801 / SPH-1).